The sequence spans 420 residues: Trophoblast glycoprotein (420 aa).

Residues 1–31 form the signal peptide; that stretch reads MPGGCSRGPAAGDGRLRLARLALVLLGWVSS. The Extracellular portion of the chain corresponds to 32-355; it reads SSPTSSASSF…PILPPSLQTS (324 aa). Residues 53–91 enclose the LRRNT domain; that stretch reads SAQPPLPDQCPALCECSEAARTVKCVNRNLTEVPTDLPA. 2 disulfides stabilise this stretch: cysteine 62-cysteine 68 and cysteine 66-cysteine 77. Residue asparagine 81 is glycosylated (N-linked (GlcNAc...) asparagine). 7 LRR repeats span residues 92-113, 116-139, 141-163, 172-204, 209-232, 233-255, and 256-275; these read YVRNLFLTGNQLAVLPAGAFAR, PLAELAALNLSGSRLDEVRAGAFE, LPSLRQLDLSHNPLADLSPFAFS, PSPLVELILNHIVPPEDERQNRSFEGMVVAALL, LQGLRRLELASNHFLYLPRDVLAQ, LPSLRHLDLSNNSLVSLTYVSFR, and NLTHLESLHLEDNALKVLHN. An N-linked (GlcNAc...) asparagine glycan is attached at asparagine 124. N-linked (GlcNAc...) asparagine glycosylation is present at asparagine 275. The LRRCT domain occupies 283–346; that stretch reads GLPHIRVFLD…LNSADLDCDP (64 aa). 2 cysteine pairs are disulfide-bonded: cysteine 298/cysteine 323 and cysteine 300/cysteine 344. Residues 356–376 traverse the membrane as a helical segment; that stretch reads YVFLGIVLALIGAIFLLVLYL. Residues 377-420 are Cytoplasmic-facing; sequence NRKGIKKWMHNIRDACRDHMEGYHYRYEINADPRLTNLSSNSDV. The residue at position 418 (serine 418) is a Phosphoserine.

Post-translationally, highly glycosylated. In terms of tissue distribution, expressed by all types of trophoblasts as early as 9 weeks of development. Specific for trophoblastic cells except for amniotic epithelium. In adult tissues, the expression is limited to a few epithelial cell types but is found on a variety of carcinoma.

The protein resides in the cell membrane. May function as an inhibitor of Wnt/beta-catenin signaling by indirectly interacting with LRP6 and blocking Wnt3a-dependent LRP6 internalization. The chain is Trophoblast glycoprotein (TPBG) from Homo sapiens (Human).